We begin with the raw amino-acid sequence, 54 residues long: Secreted virulence factor MC69 (54 aa).

The N-terminal stretch at 1 to 16 (MKAAFVLALCASLASA) is a signal peptide. Cysteine 36 and cysteine 46 are disulfide-bonded.

This sequence belongs to the MC69 virulence factor family.

It localises to the secreted. Secreted protein required for appressorial penetration of intact host epidermal cells and for pathogenicity. This Pyricularia oryzae (strain 70-15 / ATCC MYA-4617 / FGSC 8958) (Rice blast fungus) protein is Secreted virulence factor MC69.